Reading from the N-terminus, the 332-residue chain is 2-oxoglutarate-dependent dioxygenase ecdK (332 aa).

The Fe2OG dioxygenase domain maps to 178 to 294 (HASELRLNHY…RRSVAFFLKP (117 aa)). His206, Asp208, and His266 together coordinate Fe cation. Arg285 provides a ligand contact to 2-oxoglutarate.

It belongs to the iron/ascorbate-dependent oxidoreductase family. Requires Fe(2+) as cofactor.

Its pathway is antifungal biosynthesis. In terms of biological role, 2-oxoglutarate-dependent dioxygenase; part of the gene cluster that mediates the biosynthesis of echinocandin B, a fungal lipidated cyclic hexapeptide that acts as an antifungal agent. Linoleoyl-AMP, produced by the fatty-acyl-AMP ligase ecdI, is transferred to the initiation carrier domain (T0) of ecdA. The linoleoyl-S-phosphopantetheinyl-T0 is sequentially extended with L-ornithine, L-threonine, L-proline, L-homotyrosine, L-threonine, and 4R-methyl-L-proline to form the linear hexapeptide. Thereafter, the terminal condensation (C7) performs macrocyclization of the NRPS product and the cyclic scaffold is released from ecdA. All six of the amino acid residues are hydroxylated, including 4R,5R-dihydroxy-L-ornithine, 4R-hydroxyl-L-proline, 3S,4S-dihydroxy-L-homotyrosine, and 3S-hydroxyl-4S-methyl-L-prolin. In the pathway, all the hydroxylation reactions are proposed to occur following completion of the cyclic peptide, so the unhydroxylated precursor produced by ecdA will undergo six rounds of hydroxylation. Five hydroxylase genes (ecdG, ecdH, ecdK, htyE and htyF) are embedded within the echinocandin B (ecd) and L-homotyrosine (hty) clusters. The protein is 2-oxoglutarate-dependent dioxygenase ecdK of Aspergillus rugulosus (Emericella rugulosa).